A 456-amino-acid polypeptide reads, in one-letter code: Histidine--tRNA ligase (456 aa).

The protein belongs to the class-II aminoacyl-tRNA synthetase family. As to quaternary structure, homodimer.

The protein resides in the cytoplasm. The catalysed reaction is tRNA(His) + L-histidine + ATP = L-histidyl-tRNA(His) + AMP + diphosphate + H(+). In Borreliella burgdorferi (strain ATCC 35210 / DSM 4680 / CIP 102532 / B31) (Borrelia burgdorferi), this protein is Histidine--tRNA ligase (hisS).